Consider the following 229-residue polypeptide: MPLNEVSGNAFPRTVLFDLDGTLLDSAPDMLATANAMLAARGRAPITLMQLRPVISRGTFRIIAVAFPELDAAAIQGLIPEFLQRYEALIGSVSKPFDGVEMMLHALECAGTVWGIVTNKPEFLARLILPLLGWTSRCAVLIGGDTLAERKPHPLPLLTAAERIGVMPTDCVYVGDDVRDIQAARAAGMPSMVALWGYRSHEDNPMTWQADTLVEQPHLLSRPDVWPST.

Aspartate 18 functions as the Nucleophile in the catalytic mechanism. Mg(2+) is bound by residues aspartate 18, aspartate 20, and aspartate 176.

It belongs to the HAD-like hydrolase superfamily. CbbY/CbbZ/Gph/YieH family. It depends on Mg(2+) as a cofactor.

It carries out the reaction 2-phosphoglycolate + H2O = glycolate + phosphate. It functions in the pathway organic acid metabolism; glycolate biosynthesis; glycolate from 2-phosphoglycolate: step 1/1. Functionally, specifically catalyzes the dephosphorylation of 2-phosphoglycolate. Is involved in the dissimilation of the intracellular 2-phosphoglycolate formed during the DNA repair of 3'-phosphoglycolate ends, a major class of DNA lesions induced by oxidative stress. This chain is Phosphoglycolate phosphatase, found in Xylella fastidiosa (strain Temecula1 / ATCC 700964).